The primary structure comprises 162 residues: Peroxiredoxin-2 (162 aa).

The Thioredoxin domain occupies 4-162; it reads IAVGDVLPDG…SSADDILKDL (159 aa). Cys-51 acts as the Cysteine sulfenic acid (-SOH) intermediate in catalysis.

It belongs to the peroxiredoxin family. Prx5 subfamily. In terms of assembly, monomer. Homodimer. Glutathionylation of C(P) causes the dimer to dissociate. Subsequent reduction of the mixed disulfide bond leads again to dimerization.

It carries out the reaction [glutaredoxin]-dithiol + a hydroperoxide = [glutaredoxin]-disulfide + an alcohol + H2O. Its function is as follows. Thiol-specific peroxidase that catalyzes the reduction of hydrogen peroxide and organic hydroperoxides to water and alcohols, respectively. Can reduce H(2)O(2) and short chain organic, fatty acid, and phospholipid hydroperoxides. Plays a role in cell protection against oxidative stress by detoxifying peroxides. The polypeptide is Peroxiredoxin-2 (Populus trichocarpa (Western balsam poplar)).